The primary structure comprises 689 residues: DNA topoisomerase 1 (689 aa).

One can recognise a Toprim domain in the interval 3–113 (DNLVIVESPA…KENRVVFNEI (111 aa)). Mg(2+) contacts are provided by glutamate 9 and aspartate 82. In terms of domain architecture, Topo IA-type catalytic spans 129–557 (EMNLVDAQQA…FFSSFKQDVE (429 aa)). Positions 163-168 (SAGRVQ) are interaction with DNA. Tyrosine 298 acts as the O-(5'-phospho-DNA)-tyrosine intermediate in catalysis. The segment at 328–356 (SKRKASGKQGDQDAHEAIRPSSTMRTPDD) is disordered. C4-type zinc fingers lie at residues 577–603 (CEICGSPMVIKMGRYGKFMACSNFPDC), 617–645 (CPKCNDGDVVERKSKKNRVFYGCSKYPEC), and 658–681 (CPKCNQYLVENKKGKTTQVICSNC).

The protein belongs to the type IA topoisomerase family. In terms of assembly, monomer. It depends on Mg(2+) as a cofactor.

The enzyme catalyses ATP-independent breakage of single-stranded DNA, followed by passage and rejoining.. Releases the supercoiling and torsional tension of DNA, which is introduced during the DNA replication and transcription, by transiently cleaving and rejoining one strand of the DNA duplex. Introduces a single-strand break via transesterification at a target site in duplex DNA. The scissile phosphodiester is attacked by the catalytic tyrosine of the enzyme, resulting in the formation of a DNA-(5'-phosphotyrosyl)-enzyme intermediate and the expulsion of a 3'-OH DNA strand. The free DNA strand then undergoes passage around the unbroken strand, thus removing DNA supercoils. Finally, in the religation step, the DNA 3'-OH attacks the covalent intermediate to expel the active-site tyrosine and restore the DNA phosphodiester backbone. The sequence is that of DNA topoisomerase 1 from Staphylococcus aureus (strain USA300).